Here is a 181-residue protein sequence, read N- to C-terminus: Adenylate kinase (181 aa).

7-15 serves as a coordination point for ATP; that stretch reads GVAGVGKTT.

It belongs to the archaeal adenylate kinase family.

The protein localises to the cytoplasm. It carries out the reaction AMP + ATP = 2 ADP. The protein is Adenylate kinase (adkA) of Thermoplasma volcanium (strain ATCC 51530 / DSM 4299 / JCM 9571 / NBRC 15438 / GSS1).